The chain runs to 115 residues: Large ribosomal subunit protein bL20 (115 aa).

It belongs to the bacterial ribosomal protein bL20 family.

In terms of biological role, binds directly to 23S ribosomal RNA and is necessary for the in vitro assembly process of the 50S ribosomal subunit. It is not involved in the protein synthesizing functions of that subunit. This Chlorobium phaeovibrioides (strain DSM 265 / 1930) (Prosthecochloris vibrioformis (strain DSM 265)) protein is Large ribosomal subunit protein bL20.